We begin with the raw amino-acid sequence, 314 residues long: Homoserine kinase (314 aa).

Position 95–105 (95–105) interacts with ATP; the sequence is PHSRGLGSSAA.

This sequence belongs to the GHMP kinase family. Homoserine kinase subfamily.

The protein resides in the cytoplasm. It carries out the reaction L-homoserine + ATP = O-phospho-L-homoserine + ADP + H(+). It functions in the pathway amino-acid biosynthesis; L-threonine biosynthesis; L-threonine from L-aspartate: step 4/5. In terms of biological role, catalyzes the ATP-dependent phosphorylation of L-homoserine to L-homoserine phosphate. The chain is Homoserine kinase from Mycolicibacterium vanbaalenii (strain DSM 7251 / JCM 13017 / BCRC 16820 / KCTC 9966 / NRRL B-24157 / PYR-1) (Mycobacterium vanbaalenii).